A 329-amino-acid chain; its full sequence is Biotin synthase (329 aa).

The region spanning 38–262 (NTIQVSTLLS…IMPHSYIRLS (225 aa)) is the Radical SAM core domain. [4Fe-4S] cluster contacts are provided by C53, C57, and C60. 4 residues coordinate [2Fe-2S] cluster: C97, C128, C188, and R260.

It belongs to the radical SAM superfamily. Biotin synthase family. In terms of assembly, homodimer. [4Fe-4S] cluster is required as a cofactor. It depends on [2Fe-2S] cluster as a cofactor.

The catalysed reaction is (4R,5S)-dethiobiotin + (sulfur carrier)-SH + 2 reduced [2Fe-2S]-[ferredoxin] + 2 S-adenosyl-L-methionine = (sulfur carrier)-H + biotin + 2 5'-deoxyadenosine + 2 L-methionine + 2 oxidized [2Fe-2S]-[ferredoxin]. The protein operates within cofactor biosynthesis; biotin biosynthesis; biotin from 7,8-diaminononanoate: step 2/2. Its function is as follows. Catalyzes the conversion of dethiobiotin (DTB) to biotin by the insertion of a sulfur atom into dethiobiotin via a radical-based mechanism. In Acinetobacter calcoaceticus, this protein is Biotin synthase.